The primary structure comprises 38 residues: Large ribosomal subunit protein bL36 (38 aa).

It belongs to the bacterial ribosomal protein bL36 family.

The protein is Large ribosomal subunit protein bL36 of Wigglesworthia glossinidia brevipalpis.